Here is a 98-residue protein sequence, read N- to C-terminus: uncharacterized protein (98 aa).

The next 2 membrane-spanning stretches (helical) occupy residues 13–33 (LFSLAINEPSPTFALTIIAIF) and 65–85 (IMVIISYLKYVNLPCSFIFIS).

It is found in the membrane. This is an uncharacterized protein from Saccharomyces cerevisiae (strain ATCC 204508 / S288c) (Baker's yeast).